The following is a 412-amino-acid chain: Arginine biosynthesis bifunctional protein ArgJ (412 aa).

Residues T155, K181, T192, E279, N407, and S412 each coordinate substrate. T192 functions as the Nucleophile in the catalytic mechanism.

This sequence belongs to the ArgJ family. Heterotetramer of two alpha and two beta chains.

Its subcellular location is the cytoplasm. It catalyses the reaction N(2)-acetyl-L-ornithine + L-glutamate = N-acetyl-L-glutamate + L-ornithine. The catalysed reaction is L-glutamate + acetyl-CoA = N-acetyl-L-glutamate + CoA + H(+). It participates in amino-acid biosynthesis; L-arginine biosynthesis; L-ornithine and N-acetyl-L-glutamate from L-glutamate and N(2)-acetyl-L-ornithine (cyclic): step 1/1. It functions in the pathway amino-acid biosynthesis; L-arginine biosynthesis; N(2)-acetyl-L-ornithine from L-glutamate: step 1/4. In terms of biological role, catalyzes two activities which are involved in the cyclic version of arginine biosynthesis: the synthesis of N-acetylglutamate from glutamate and acetyl-CoA as the acetyl donor, and of ornithine by transacetylation between N(2)-acetylornithine and glutamate. The protein is Arginine biosynthesis bifunctional protein ArgJ of Aromatoleum aromaticum (strain DSM 19018 / LMG 30748 / EbN1) (Azoarcus sp. (strain EbN1)).